Here is an 843-residue protein sequence, read N- to C-terminus: Protein P (843 aa).

Residues 1 to 177 (MPLSYQHFRK…FCGSPYSWEQ (177 aa)) are terminal protein domain (TP). A spacer region spans residues 178–346 (DLQHGRLVFQ…YCLSHIVNLI (169 aa)). 2 disordered regions span residues 219 to 249 (RKSR…RIHP) and 290 to 316 (STSK…RSQS). Polar residues predominate over residues 290-299 (STSKGHSSSG). Residues 347–690 (EDWGPCAEHG…YMTLYPVARQ (344 aa)) form a polymerase/reverse transcriptase domain (RT) region. A Reverse transcriptase domain is found at 357–600 (EHRIRTPRTP…YSLNFMGYVI (244 aa)). Residues Asp-429, Asp-551, and Asp-552 each contribute to the Mg(2+) site.

Belongs to the hepadnaviridae P protein family.

The enzyme catalyses DNA(n) + a 2'-deoxyribonucleoside 5'-triphosphate = DNA(n+1) + diphosphate. It catalyses the reaction Endonucleolytic cleavage to 5'-phosphomonoester.. Its activity is regulated as follows. Activated by host HSP70 and HSP40 in vitro to be able to bind the epsilon loop of the pgRNA. Because deletion of the RNase H region renders the protein partly chaperone-independent, the chaperones may be needed indirectly to relieve occlusion of the RNA-binding site by this domain. Inhibited by several reverse-transcriptase inhibitors: Lamivudine, Adefovir and Entecavir. Functionally, multifunctional enzyme that converts the viral RNA genome into dsDNA in viral cytoplasmic capsids. This enzyme displays a DNA polymerase activity that can copy either DNA or RNA templates, and a ribonuclease H (RNase H) activity that cleaves the RNA strand of RNA-DNA heteroduplexes in a partially processive 3'- to 5'-endonucleasic mode. Neo-synthesized pregenomic RNA (pgRNA) are encapsidated together with the P protein, and reverse-transcribed inside the nucleocapsid. Initiation of reverse-transcription occurs first by binding the epsilon loop on the pgRNA genome, and is initiated by protein priming, thereby the 5'-end of (-)DNA is covalently linked to P protein. Partial (+)DNA is synthesized from the (-)DNA template and generates the relaxed circular DNA (RC-DNA) genome. After budding and infection, the RC-DNA migrates in the nucleus, and is converted into a plasmid-like covalently closed circular DNA (cccDNA). The activity of P protein does not seem to be necessary for cccDNA generation, and is presumably released from (+)DNA by host nuclear DNA repair machinery. This is Protein P from Homo sapiens (Human).